Consider the following 552-residue polypeptide: Phosphoglucomutase (552 aa).

The Phosphoserine intermediate role is filled by Ser-143. The Mg(2+) site is built by Ser-143, Asp-295, Asp-297, and Asp-299.

This sequence belongs to the phosphohexose mutase family. Mg(2+) is required as a cofactor.

The enzyme catalyses alpha-D-glucose 1-phosphate = alpha-D-glucose 6-phosphate. Its pathway is glycolipid metabolism; diglucosyl-diacylglycerol biosynthesis. In terms of biological role, catalyzes the interconversion between glucose-6-phosphate and alpha-glucose-1-phosphate. This is the first step in the biosynthesis of diglucosyl-diacylglycerol (Glc2-DAG), i.e. the predominant glycolipid found in the S.aureus membrane, which is also used as a membrane anchor for lipoteichoic acid (LTA). The chain is Phosphoglucomutase (pgcA) from Staphylococcus aureus (strain Mu50 / ATCC 700699).